A 602-amino-acid polypeptide reads, in one-letter code: CDPK-related protein kinase (602 aa).

Residues 1–59 are disordered; the sequence is MGICVSKPSPEPDLHNHHTSIPVNDTSLPPQDNSIPPKDIAIPAQDNNKPPGKKSPFLP. The span at 19-34 shows a compositional bias: polar residues; it reads TSIPVNDTSLPPQDNS. 3 tandem repeats follow at residues 20 to 26, 27 to 33, and 34 to 40. The interval 20–40 is 3 X 7 AA tandem repeats of S-[LI]-P-X-X-D-X; that stretch reads SIPVNDTSLPPQDNSIPPKDI. The Protein kinase domain maps to 148 to 410; sequence FEVGEEVGRG…AAQALCHSWI (263 aa). Residues 154 to 162 and K180 each bind ATP; that span reads VGRGHFGYT. D276 serves as the catalytic Proton acceptor. EF-hand domains follow at residues 451-486, 487-527, 528-563, and 564-602; these read VDEL…RNST, DAMK…LEAL, DRWE…LGPS, and IPVH…AKAQ.

This sequence belongs to the protein kinase superfamily. CAMK Ser/Thr protein kinase family. CaMK subfamily.

The enzyme catalyses L-seryl-[protein] + ATP = O-phospho-L-seryl-[protein] + ADP + H(+). It catalyses the reaction L-threonyl-[protein] + ATP = O-phospho-L-threonyl-[protein] + ADP + H(+). This Daucus carota (Wild carrot) protein is CDPK-related protein kinase (CRK).